The chain runs to 516 residues: Solute carrier family 49 member A3 (516 aa).

The span at 1-10 (MAGTMDRLED) shows a compositional bias: basic and acidic residues. The disordered stretch occupies residues 1–22 (MAGTMDRLEDCNSPETSGTAGD). The next 12 helical transmembrane spans lie at 34–54 (WVFLLVVSLLSCSNAMLWLSF), 74–94 (WLSLIYFVLSIPFGMAAIWVL), 104–124 (ILGAWLNFSGSVLRAVPCLPV), 139–159 (LCALAQTLVVSSPAKLAALWF), 170–190 (ISTMSNPLGLLIANVLSPALV), 199–219 (MLGIYIGPAALACLLATVCLW), 253–273 (VLLAVCFGGGIGVFSSFSALL), 289–309 (LCGALFIVFGILGALLLGLYV), 321–341 (IGLCLTSMTSVAFALVSQLQG), 344–364 (LALAAICSLFGLFGFSVAPVV), 382–402 (GLIFVLGQAEGMLIMLLLTAL), and 425–445 (VSLLLLAGLCTLFTCVLVIFF). The interval 453–516 (EAESGGSSSP…EWAETMPRDV (64 aa)) is disordered. The span at 504 to 516 (GHSEWAETMPRDV) shows a compositional bias: basic and acidic residues.

The protein belongs to the major facilitator superfamily.

The protein localises to the membrane. The protein is Solute carrier family 49 member A3 (Slc49a3) of Mus musculus (Mouse).